A 73-amino-acid chain; its full sequence is Large ribosomal subunit protein bL31 (73 aa).

This sequence belongs to the bacterial ribosomal protein bL31 family. Type A subfamily. As to quaternary structure, part of the 50S ribosomal subunit.

Its function is as follows. Binds the 23S rRNA. In Jannaschia sp. (strain CCS1), this protein is Large ribosomal subunit protein bL31 (rpmE).